The primary structure comprises 129 residues: Glycine cleavage system H protein (129 aa).

Residues 24–106 (EAVVGITEHA…YGAGWLFRIK (83 aa)) enclose the Lipoyl-binding domain. Lys-65 is subject to N6-lipoyllysine.

Belongs to the GcvH family. As to quaternary structure, the glycine cleavage system is composed of four proteins: P, T, L and H. (R)-lipoate is required as a cofactor.

Functionally, the glycine cleavage system catalyzes the degradation of glycine. The H protein shuttles the methylamine group of glycine from the P protein to the T protein. The polypeptide is Glycine cleavage system H protein (Aeromonas hydrophila subsp. hydrophila (strain ATCC 7966 / DSM 30187 / BCRC 13018 / CCUG 14551 / JCM 1027 / KCTC 2358 / NCIMB 9240 / NCTC 8049)).